Here is a 632-residue protein sequence, read N- to C-terminus: Chaperone protein HtpG (632 aa).

The interval 1–339 (MTQQTMSFQA…SSDLPLNVSR (339 aa)) is a; substrate-binding. The tract at residues 340-559 (EILQESRDVK…DNDMSGYLQR (220 aa)) is b. The interval 560-632 (MLKAAGQNAP…TNALLLSRAA (73 aa)) is c.

This sequence belongs to the heat shock protein 90 family. Homodimer.

The protein localises to the cytoplasm. In terms of biological role, molecular chaperone. Has ATPase activity. This is Chaperone protein HtpG from Burkholderia thailandensis (strain ATCC 700388 / DSM 13276 / CCUG 48851 / CIP 106301 / E264).